A 265-amino-acid polypeptide reads, in one-letter code: UDP-N-acetylenolpyruvoylglucosamine reductase (265 aa).

In terms of domain architecture, FAD-binding PCMH-type spans 15–169; sequence GVGGPAELWT…TRVRLKLKER (155 aa). Residue Arg149 is part of the active site. A disordered region spans residues 182 to 203; that stretch reads DRARKGQPKRKSAGCAFKNPPG. Residue Cys196 is the Proton donor of the active site.

The protein belongs to the MurB family. Requires FAD as cofactor.

It localises to the cytoplasm. The enzyme catalyses UDP-N-acetyl-alpha-D-muramate + NADP(+) = UDP-N-acetyl-3-O-(1-carboxyvinyl)-alpha-D-glucosamine + NADPH + H(+). The protein operates within cell wall biogenesis; peptidoglycan biosynthesis. In terms of biological role, cell wall formation. This chain is UDP-N-acetylenolpyruvoylglucosamine reductase, found in Thermus thermophilus (strain ATCC 27634 / DSM 579 / HB8).